The sequence spans 706 residues: Acyl-coenzyme A oxidase (706 aa).

Residues 682-706 (MLNRPSKEERERFEKSTETAKILSK) are disordered. Residues 686–699 (PSKEERERFEKSTE) show a composition bias toward basic and acidic residues.

It belongs to the acyl-CoA oxidase family. The cofactor is FAD.

It localises to the peroxisome. It catalyses the reaction a 2,3-saturated acyl-CoA + O2 = a (2E)-enoyl-CoA + H2O2. The protein operates within lipid metabolism; peroxisomal fatty acid beta-oxidation. The chain is Acyl-coenzyme A oxidase (POX1) from Debaryomyces hansenii (strain ATCC 36239 / CBS 767 / BCRC 21394 / JCM 1990 / NBRC 0083 / IGC 2968) (Yeast).